Here is a 333-residue protein sequence, read N- to C-terminus: Protein-methionine-sulfoxide reductase catalytic subunit MsrP (333 aa).

The segment at residues 1 to 43 (MHKHRKPTEADVTPESLFYQRRRVLKALGISAAALSLPLSAQA) is a signal peptide (tat-type signal). Residues asparagine 87, 90 to 91 (YE), cysteine 145, threonine 180, asparagine 232, arginine 237, and 248 to 250 (NIK) each bind Mo-molybdopterin.

It belongs to the MsrP family. Heterodimer of a catalytic subunit (MsrP) and a heme-binding subunit (MsrQ). Mo-molybdopterin is required as a cofactor. In terms of processing, predicted to be exported by the Tat system. The position of the signal peptide cleavage has not been experimentally proven.

It is found in the periplasm. The catalysed reaction is L-methionyl-[protein] + a quinone + H2O = L-methionyl-(S)-S-oxide-[protein] + a quinol. It carries out the reaction L-methionyl-[protein] + a quinone + H2O = L-methionyl-(R)-S-oxide-[protein] + a quinol. Its function is as follows. Part of the MsrPQ system that repairs oxidized periplasmic proteins containing methionine sulfoxide residues (Met-O), using respiratory chain electrons. Thus protects these proteins from oxidative-stress damage caused by reactive species of oxygen and chlorine generated by the host defense mechanisms. MsrPQ is essential for the maintenance of envelope integrity under bleach stress, rescuing a wide series of structurally unrelated periplasmic proteins from methionine oxidation. The catalytic subunit MsrP is non-stereospecific, being able to reduce both (R-) and (S-) diastereoisomers of methionine sulfoxide. In Pectobacterium atrosepticum (strain SCRI 1043 / ATCC BAA-672) (Erwinia carotovora subsp. atroseptica), this protein is Protein-methionine-sulfoxide reductase catalytic subunit MsrP.